The primary structure comprises 132 residues: Bleomycin resistance protein (132 aa).

The region spanning 1–129 (MLQSIPALPV…DNNLISFFQQ (129 aa)) is the VOC domain.

Belongs to the bleomycin resistance protein family.

Its function is as follows. Binding protein with a strong affinity to the bleomycin family of antibiotics. This is Bleomycin resistance protein (bleO) from Geobacillus stearothermophilus (Bacillus stearothermophilus).